The chain runs to 263 residues: 4-hydroxy-tetrahydrodipicolinate reductase (263 aa).

NAD(+) is bound by residues 7–12 (GASGRM) and D33. R34 provides a ligand contact to NADP(+). Residues 96 to 98 (GTT) and 120 to 123 (APNM) contribute to the NAD(+) site. H153 (proton donor/acceptor) is an active-site residue. Position 154 (H154) interacts with (S)-2,3,4,5-tetrahydrodipicolinate. Catalysis depends on K157, which acts as the Proton donor. 163–164 (GT) serves as a coordination point for (S)-2,3,4,5-tetrahydrodipicolinate.

It belongs to the DapB family.

The protein localises to the cytoplasm. The catalysed reaction is (S)-2,3,4,5-tetrahydrodipicolinate + NAD(+) + H2O = (2S,4S)-4-hydroxy-2,3,4,5-tetrahydrodipicolinate + NADH + H(+). It catalyses the reaction (S)-2,3,4,5-tetrahydrodipicolinate + NADP(+) + H2O = (2S,4S)-4-hydroxy-2,3,4,5-tetrahydrodipicolinate + NADPH + H(+). It participates in amino-acid biosynthesis; L-lysine biosynthesis via DAP pathway; (S)-tetrahydrodipicolinate from L-aspartate: step 4/4. In terms of biological role, catalyzes the conversion of 4-hydroxy-tetrahydrodipicolinate (HTPA) to tetrahydrodipicolinate. The protein is 4-hydroxy-tetrahydrodipicolinate reductase of Ralstonia pickettii (strain 12J).